The primary structure comprises 645 residues: Protein disulfide-isomerase A4 (645 aa).

An N-terminal signal peptide occupies residues 1-20; that stretch reads MRPRKAFLLLLLLGLVQLLA. Thioredoxin domains lie at 21–169 and 158–301; these read VAGA…EVSQ and EEIV…EFLK. The segment at 24–58 is disordered; that stretch reads AEGPDEDSSNRENAIEDEEEEEEEDDDEEEDDLEV. Positions 38–58 are enriched in acidic residues; sequence IEDEEEEEEEDDDEEEDDLEV. A CXXC motif is present at residues 91–94; it reads CGHC. 2 disulfides stabilise this stretch: cysteine 91–cysteine 94 and cysteine 206–cysteine 209. Position 366 is an N6-acetyllysine (lysine 366). Residues 505–636 form the Thioredoxin 3 domain; it reads FKKGKLKPVI…LSKFIEEHAT (132 aa). The CXXC signature appears at 555–558; the sequence is CGHC. A disulfide bond links cysteine 555 and cysteine 558. Positions 642 to 645 match the Prevents secretion from ER motif; that stretch reads KEEL.

The protein belongs to the protein disulfide isomerase family. As to quaternary structure, part of a large chaperone multiprotein complex comprising DNAJB11, HSP90B1, HSPA5, HYOU, PDIA2, PDIA4, PDIA6, PPIB, SDF2L1, UGGT1 and very small amounts of ERP29, but not, or at very low levels, CALR nor CANX. Component of a complex containing at least CRELD2, MANF, MATN3 and PDIA4. In terms of assembly, (Microbial infection) Interacts with Human astrovirus-1 and Human astrovirus-8 spike protein VP25; this interaction seems to facilitate the uncoating during virus entry into the cell. Does not interact with Human astrovirus-2 spike protein VP25.

It is found in the endoplasmic reticulum lumen. It localises to the melanosome. It carries out the reaction Catalyzes the rearrangement of -S-S- bonds in proteins.. The protein is Protein disulfide-isomerase A4 (PDIA4) of Homo sapiens (Human).